The primary structure comprises 898 residues: Fasciclin-2 (898 aa).

The first 22 residues, 1–22 (MRTVACAVLLACFMGCLAGAWA), serve as a signal peptide directing secretion. Residues 23–764 (QSAGLEILPN…EDGSEGQMSS (742 aa)) lie on the Extracellular side of the membrane. 5 Ig-like C2-type domains span residues 31–124 (PNSE…KQLS), 134–219 (PITW…RPIR), 226–316 (PQMS…VEVT), 321–423 (PRIG…GHLM), and 428–525 (PSFA…IMLR). N-linked (GlcNAc...) asparagine glycosylation is found at Asn-35, Asn-51, Asn-149, Asn-192, Asn-297, and Asn-328. An intrachain disulfide couples Cys-48 to Cys-113. Cystine bridges form between Cys-156–Cys-203 and Cys-248–Cys-300. The cysteines at positions 343 and 407 are disulfide-linked. N-linked (GlcNAc...) asparagine glycans are attached at residues Asn-447, Asn-457, and Asn-580. Cys-450 and Cys-509 are joined by a disulfide. Fibronectin type-III domains are found at residues 532–626 (AVLQ…TPRI) and 644–745 (GTEN…VKDP). A helical transmembrane segment spans residues 765–782 (AAIVVLVVAALLLALLVV). Residues 783 to 898 (DLVCCLVWRG…TSFVGKDSAV (116 aa)) are Cytoplasmic-facing.

Its subcellular location is the membrane. Neuronal recognition molecule. Involved in a pathway recognition for axons during the development of nerve fascicles. This is Fasciclin-2 (FAS2) from Schistocerca americana (American grasshopper).